The following is a 173-amino-acid chain: Shikimate kinase 1 (173 aa).

14–19 (GAGKST) provides a ligand contact to ATP. S18 contacts Mg(2+). D36, R60, and G82 together coordinate substrate. Position 120 (R120) interacts with ATP. R140 contacts substrate.

The protein belongs to the shikimate kinase family. As to quaternary structure, monomer. Requires Mg(2+) as cofactor.

It is found in the cytoplasm. The catalysed reaction is shikimate + ATP = 3-phosphoshikimate + ADP + H(+). Its pathway is metabolic intermediate biosynthesis; chorismate biosynthesis; chorismate from D-erythrose 4-phosphate and phosphoenolpyruvate: step 5/7. Functionally, catalyzes the specific phosphorylation of the 3-hydroxyl group of shikimic acid using ATP as a cosubstrate. In Hamiltonella defensa subsp. Acyrthosiphon pisum (strain 5AT), this protein is Shikimate kinase 1.